The primary structure comprises 388 residues: UDP-4-amino-4-deoxy-L-arabinose--oxoglutarate aminotransferase (388 aa).

N6-(pyridoxal phosphate)lysine is present on Lys183.

Belongs to the DegT/DnrJ/EryC1 family. ArnB subfamily. In terms of assembly, homodimer. It depends on pyridoxal 5'-phosphate as a cofactor.

It carries out the reaction UDP-4-amino-4-deoxy-beta-L-arabinose + 2-oxoglutarate = UDP-beta-L-threo-pentopyranos-4-ulose + L-glutamate. It functions in the pathway nucleotide-sugar biosynthesis; UDP-4-deoxy-4-formamido-beta-L-arabinose biosynthesis; UDP-4-deoxy-4-formamido-beta-L-arabinose from UDP-alpha-D-glucuronate: step 2/3. The protein operates within bacterial outer membrane biogenesis; lipopolysaccharide biosynthesis. Catalyzes the conversion of UDP-4-keto-arabinose (UDP-Ara4O) to UDP-4-amino-4-deoxy-L-arabinose (UDP-L-Ara4N). The modified arabinose is attached to lipid A and is required for resistance to polymyxin and cationic antimicrobial peptides. In Shewanella sediminis (strain HAW-EB3), this protein is UDP-4-amino-4-deoxy-L-arabinose--oxoglutarate aminotransferase.